We begin with the raw amino-acid sequence, 331 residues long: Zinc finger CW-type PWWP domain protein 2 homolog (331 aa).

Residues 9-64 (EFVHRTWVQCENESCLKWRLLSPAAAAAVNPSEPWYCFMNTDPSYSSCSVSEEDFP) form a CW-type zinc finger. Residues C18, C23, C45, and C56 each contribute to the Zn(2+) site. Residues 83–147 (LGSLVLVKLR…AAFVGHFSLT (65 aa)) enclose the PWWP domain. The tract at residues 264 to 295 (IQEPTAREDESQGEQLSQCSPESPTGSPFQSY) is disordered. A compositionally biased stretch (polar residues) spans 276 to 293 (GEQLSQCSPESPTGSPFQ).

Histone methylation reader which binds to non-methylated (H3K4me0), monomethylated (H3K4me1), dimethylated (H3K4me2) and trimethylated (H3K4me3) 'Lys-4' on histone H3. The order of binding preference is H3K4me3 &gt; H3K4me2 &gt; H3K4me1 &gt; H3K4me0. This is Zinc finger CW-type PWWP domain protein 2 homolog (Zcwpw2) from Mus musculus (Mouse).